We begin with the raw amino-acid sequence, 296 residues long: tRNA-cytidine(32) 2-sulfurtransferase (296 aa).

A PP-loop motif motif is present at residues 72–77 (SGGKDS). [4Fe-4S] cluster contacts are provided by C147, C150, and C238.

Belongs to the TtcA family. Homodimer. Requires Mg(2+) as cofactor. The cofactor is [4Fe-4S] cluster.

The protein localises to the cytoplasm. The catalysed reaction is cytidine(32) in tRNA + S-sulfanyl-L-cysteinyl-[cysteine desulfurase] + AH2 + ATP = 2-thiocytidine(32) in tRNA + L-cysteinyl-[cysteine desulfurase] + A + AMP + diphosphate + H(+). Its pathway is tRNA modification. Catalyzes the ATP-dependent 2-thiolation of cytidine in position 32 of tRNA, to form 2-thiocytidine (s(2)C32). The sulfur atoms are provided by the cysteine/cysteine desulfurase (IscS) system. The polypeptide is tRNA-cytidine(32) 2-sulfurtransferase (Sinorhizobium fredii (strain NBRC 101917 / NGR234)).